A 272-amino-acid chain; its full sequence is METYAVFGNPIAHSKSPFIHQQFAQQLDIVHPYGRVLAPINNFINTLDAFFAAGGKGANITVPFKEEAFARSDELTERASLAGAVNTLKRLEDGRLLGDNTDGIGLLSDLKRLNFIRPGLRILLIGAGGASRGVLLPLLSLDCAVTITNRTASRAEALAKIFAHTGSVHATDMDKLDGCEFDLIINATSSGIRGEIPAIPASLIHPSLCCYDMFYQKGNTPFLSWCVQQGAKRYADGLGMLVGQAAHAVLLWHGVLPQVEPVIELLQQELLA.

Residues serine 14–serine 16 and threonine 61 each bind shikimate. Lysine 65 acts as the Proton acceptor in catalysis. An NADP(+)-binding site is contributed by glutamate 77. The shikimate site is built by asparagine 86 and aspartate 102. Residues glycine 126 to alanine 130, asparagine 149 to arginine 154, and methionine 213 contribute to the NADP(+) site. Tyrosine 215 contributes to the shikimate binding site. Residue glycine 237 coordinates NADP(+).

This sequence belongs to the shikimate dehydrogenase family. As to quaternary structure, homodimer.

It carries out the reaction shikimate + NADP(+) = 3-dehydroshikimate + NADPH + H(+). It participates in metabolic intermediate biosynthesis; chorismate biosynthesis; chorismate from D-erythrose 4-phosphate and phosphoenolpyruvate: step 4/7. Its function is as follows. Involved in the biosynthesis of the chorismate, which leads to the biosynthesis of aromatic amino acids. Catalyzes the reversible NADPH linked reduction of 3-dehydroshikimate (DHSA) to yield shikimate (SA). This Salmonella heidelberg (strain SL476) protein is Shikimate dehydrogenase (NADP(+)).